The sequence spans 519 residues: Laccase-2 (519 aa).

The signal sequence occupies residues 1 to 20 (MGLQRFSFFVTLALVARSLA). 2 Plastocyanin-like domains span residues 22-147 (IGPV…FVVY) and 159-301 (VDNE…ILRY). An N-linked (GlcNAc...) asparagine glycan is attached at asparagine 74. Cu cation contacts are provided by histidine 84, histidine 86, histidine 129, and histidine 131. Intrachain disulfides connect cysteine 105/cysteine 508 and cysteine 137/cysteine 225. N-linked (GlcNAc...) asparagine glycans are attached at residues asparagine 161, asparagine 228, asparagine 237, asparagine 271, asparagine 353, and asparagine 361. Residues 368 to 490 (TVPVLLQILS…AGFAIVFAED (123 aa)) enclose the Plastocyanin-like 3 domain. Positions 415, 418, and 420 each coordinate Cu cation. Residue asparagine 456 is glycosylated (N-linked (GlcNAc...) asparagine). Residues histidine 472, cysteine 473, histidine 474, and histidine 478 each coordinate Cu cation.

The protein belongs to the multicopper oxidase family. Requires Cu cation as cofactor.

The protein localises to the secreted. It catalyses the reaction 4 hydroquinone + O2 = 4 benzosemiquinone + 2 H2O. In terms of biological role, lignin degradation and detoxification of lignin-derived products. The polypeptide is Laccase-2 (LCC2) (Trametes versicolor (White-rot fungus)).